The chain runs to 798 residues: Cold shock domain-containing protein E1 (798 aa).

A CSD 1 domain is found at 26-87 (ETGVIEKLLT…RTGKPIAIKL (62 aa)). At Lys-81 the chain carries N6-acetyllysine. Lys-91 is covalently cross-linked (Glycyl lysine isopeptide (Lys-Gly) (interchain with G-Cter in SUMO2)). Ser-123 carries the post-translational modification Phosphoserine. A CSD 2; truncated domain is found at 136-179 (VFYLTYTSEDVEGNVQLETGDKINFVIDNNKHTGAVSARNIMLL). In terms of domain architecture, CSD 3 spans 186-245 (CQGVVCAMKEAFGFIERGDVVKEIFFHYSEFKGDLETLQPGDDVEFTIKDRNGKEVATDV). Ser-276 carries the phosphoserine modification. The CSD 4; truncated domain maps to 297-337 (LPFGDKDTKSKVTLLEGDHVRFNISTDRRDKLERATNIEVL). 2 CSD domains span residues 349 to 410 (EMGV…AIRI) and 447 to 507 (NKGK…ATCV). The residue at position 514 (Ser-514) is a Phosphoserine. The 61-residue stretch at 519 to 579 (LLGYVATLKD…KGNKVSAEKV (61 aa)) folds into the CSD 7 domain. Residue Ser-584 is modified to Phosphoserine. 2 CSD domains span residues 610–670 (PTQI…AYNI) and 674–735 (RRAT…ACNV). In terms of domain architecture, SUZ-C spans 748-789 (PRPDRLVNRLKNITLDDASAPRLMVLRQPRGPDNSMGFGAER). Residue Thr-761 is modified to Phosphothreonine.

It belongs to the UNR family. In terms of assembly, component of a multi subunit autoregulatory ribonucleoprotein complex (ARC), at least composed of IGF2BP1, PABPC1 and CSDE1. Interacts with STRAP. Part of a complex associated with the FOS mCRD domain and consisting of PABPC1, PAIP1, HNRPD and SYNCRIP. The interaction with PABPC1 is direct and RNA-independent. Interacts with EIF4ENIF1/4E-T.

The protein localises to the cytoplasm. The protein resides in the stress granule. It is found in the P-body. Functionally, RNA-binding protein involved in translationally coupled mRNA turnover. Implicated with other RNA-binding proteins in the cytoplasmic deadenylation/translational and decay interplay of the FOS mRNA mediated by the major coding-region determinant of instability (mCRD) domain. Required for efficient formation of stress granules. This chain is Cold shock domain-containing protein E1, found in Mus musculus (Mouse).